Reading from the N-terminus, the 127-residue chain is Glycine cleavage system H protein (127 aa).

The Lipoyl-binding domain occupies 24–106; the sequence is TVTVGITDHA…FEGAWIAKIK (83 aa). Residue Lys-65 is modified to N6-lipoyllysine.

This sequence belongs to the GcvH family. The glycine cleavage system is composed of four proteins: P, T, L and H. Requires (R)-lipoate as cofactor.

Functionally, the glycine cleavage system catalyzes the degradation of glycine. The H protein shuttles the methylamine group of glycine from the P protein to the T protein. This is Glycine cleavage system H protein from Marinomonas sp. (strain MWYL1).